The sequence spans 116 residues: S-adenosylmethionine decarboxylase proenzyme (116 aa).

S62 functions as the Schiff-base intermediate with substrate; via pyruvic acid in the catalytic mechanism. S62 is modified (pyruvic acid (Ser); by autocatalysis). H67 functions as the Proton acceptor; for processing activity in the catalytic mechanism. C82 (proton donor; for catalytic activity) is an active-site residue.

The protein belongs to the prokaryotic AdoMetDC family. Type 1 subfamily. In terms of assembly, heterotetramer of two alpha and two beta chains arranged as a dimer of alpha/beta heterodimers. It depends on pyruvate as a cofactor. Is synthesized initially as an inactive proenzyme. Formation of the active enzyme involves a self-maturation process in which the active site pyruvoyl group is generated from an internal serine residue via an autocatalytic post-translational modification. Two non-identical subunits are generated from the proenzyme in this reaction, and the pyruvate is formed at the N-terminus of the alpha chain, which is derived from the carboxyl end of the proenzyme. The post-translation cleavage follows an unusual pathway, termed non-hydrolytic serinolysis, in which the side chain hydroxyl group of the serine supplies its oxygen atom to form the C-terminus of the beta chain, while the remainder of the serine residue undergoes an oxidative deamination to produce ammonia and the pyruvoyl group blocking the N-terminus of the alpha chain.

The enzyme catalyses S-adenosyl-L-methionine + H(+) = S-adenosyl 3-(methylsulfanyl)propylamine + CO2. Its pathway is amine and polyamine biosynthesis; S-adenosylmethioninamine biosynthesis; S-adenosylmethioninamine from S-adenosyl-L-methionine: step 1/1. Catalyzes the decarboxylation of S-adenosylmethionine to S-adenosylmethioninamine (dcAdoMet), the propylamine donor required for the synthesis of the polyamines spermine and spermidine from the diamine putrescine. This is S-adenosylmethionine decarboxylase proenzyme from Thermomicrobium roseum (strain ATCC 27502 / DSM 5159 / P-2).